Consider the following 758-residue polypeptide: MTVSNDTVDNAKATPELDQPWEELGLKQDEYDKIVGILGRRPTDAELTVYSVMWSEHCSYKSSKTHLRYFGETTTEEMASKILAGIGENAGVVDIGDGDAVTFRVESHNHPSFVEPYQGAATGVGGIVRDIMAMGARPIAVMDQLRFGPADAPDTARVLPGVVSGIGGYGNSLGLPNIGGETVFDESYAGNPLVNALCVGTLRVEDLKLAFASGTGNKVMLFGSRTGLDGIGGVSVLGSASFEEGEERKLPAVQVGDPFAEKVLIECCLELYAAGVVVGIQDLGGGGLACATSELAAAGDGGMVVNLDNVPLRAENMSAAEILASESQERMCAVVSPDNVEKFREICEKWDVTCAEIGEVTDKKDTYLVYHNGELVVDAPPSTIDEGPVYERPYARPQWQDEIQQAPEIARPESLVQAFKDMVSSPALSSRAFITEQYDRYVRGNTVKAKQSDSGVLRINEETSRGVAISADGSGRYTKLDPNMGARLALAEAYRNVAVTGARPYAVTNCLNFGSPENTDVMWQFREAVHGLADGSKELNIPVSGGNVSFYNQTGDEPILPTPVVGVLGVIDDVHKALAHDLGGIDEPETLILLGETKEEFGGSIWQQVSGGGLQGLPPQVDLANEAKLADFFVGNTSVAASHDLSEGGLAIAAFEMAQKNNVGVDLDLSVVHEDALTALFSESASRVLISTASDHLDGILQRASELGIPAVVVGTTNDSGNITFAGEEVATAELREAWSATLPNLFGHAVGANSVVE.

His57 is an active-site residue. ATP is bound by residues Tyr60 and Arg104. Glu106 is a binding site for Mg(2+). Substrate-binding positions include 107-110 (SHNH) and Arg129. Residue His108 is the Proton acceptor of the active site. Asp130 contributes to the Mg(2+) binding site. Gln254 contacts substrate. Asp282 is a Mg(2+) binding site. Residue 326–328 (ESQ) participates in substrate binding. ATP contacts are provided by Asn509 and Gly546. Residue Asn547 participates in Mg(2+) binding. Residue Ser549 participates in substrate binding.

Belongs to the FGAMS family. Monomer. Part of the FGAM synthase complex composed of 1 PurL, 1 PurQ and 2 PurS subunits.

Its subcellular location is the cytoplasm. It catalyses the reaction N(2)-formyl-N(1)-(5-phospho-beta-D-ribosyl)glycinamide + L-glutamine + ATP + H2O = 2-formamido-N(1)-(5-O-phospho-beta-D-ribosyl)acetamidine + L-glutamate + ADP + phosphate + H(+). It participates in purine metabolism; IMP biosynthesis via de novo pathway; 5-amino-1-(5-phospho-D-ribosyl)imidazole from N(2)-formyl-N(1)-(5-phospho-D-ribosyl)glycinamide: step 1/2. Part of the phosphoribosylformylglycinamidine synthase complex involved in the purines biosynthetic pathway. Catalyzes the ATP-dependent conversion of formylglycinamide ribonucleotide (FGAR) and glutamine to yield formylglycinamidine ribonucleotide (FGAM) and glutamate. The FGAM synthase complex is composed of three subunits. PurQ produces an ammonia molecule by converting glutamine to glutamate. PurL transfers the ammonia molecule to FGAR to form FGAM in an ATP-dependent manner. PurS interacts with PurQ and PurL and is thought to assist in the transfer of the ammonia molecule from PurQ to PurL. In Corynebacterium ammoniagenes (Brevibacterium ammoniagenes), this protein is Phosphoribosylformylglycinamidine synthase subunit PurL.